The sequence spans 66 residues: Large ribosomal subunit protein uL29 (66 aa).

This sequence belongs to the universal ribosomal protein uL29 family.

The sequence is that of Large ribosomal subunit protein uL29 from Ruegeria pomeroyi (strain ATCC 700808 / DSM 15171 / DSS-3) (Silicibacter pomeroyi).